A 61-amino-acid chain; its full sequence is uncharacterized protein (61 aa).

The first 28 residues, M1 to A28, serve as a signal peptide directing secretion.

This is an uncharacterized protein from Mycobacterium tuberculosis (strain ATCC 25618 / H37Rv).